The chain runs to 476 residues: Nodulation protein NoeA (476 aa).

In terms of biological role, not known; does not seem to participate in nod factor synthesis but required for nodulation on some specific Medicago species such as M.littoralis. In Rhizobium meliloti (strain 1021) (Ensifer meliloti), this protein is Nodulation protein NoeA (noeA).